A 505-amino-acid polypeptide reads, in one-letter code: MAKKPTALIILDGFANRESEHGNAVKLANKPNFDRYYNKYPTTQIEASGLDVGLPEGQMGNSEVGHMNIGAGRIVYQSLTRINKSIEDGDFFENDVLNNAIAHVNSHDSALHIFGLLSDGGVHSHYKHLFALLELAKKQGVEKVYVHAFLDGRDVDQKSALKYIEETEAKFNELGIGQFASVSGRYYAMDRDKRWEREEKAYNAIRNFDAPTYATAKEGVEASYNEGLTDEFVVPFIVENQNDGVNDGDAVIFYNFRPDRAAQLSEIFANRAFEGFKVEQVKDLFYATFTKYNDNIDAAIVFEKVDLNNTIGEIAQNNNLTQLRIAETEKYPHVTYFMSGGRNEEFKGERRRLIDSPKVATYDLKPEMSAYEVKDALLEELNKGDLDLIILNFANPDMVGHSGMLEPTIKAIEAVDECLGEVVDKILDMDGYAIITADHGNSDQVLTDDDQPMTTHTTNPVPVIVTKEGVTLRETGRLGDLAPTLLDLLNVEQPEDMTGESLIKH.

Mn(2+)-binding residues include Asp12 and Ser62. Catalysis depends on Ser62, which acts as the Phosphoserine intermediate. Residues His123, 153-154 (RD), Arg185, Arg191, 257-260 (RPDR), and Lys330 each bind substrate. The Mn(2+) site is built by Asp397, His401, Asp438, His439, and His456.

This sequence belongs to the BPG-independent phosphoglycerate mutase family. In terms of assembly, monomer. Requires Mn(2+) as cofactor.

The catalysed reaction is (2R)-2-phosphoglycerate = (2R)-3-phosphoglycerate. Its pathway is carbohydrate degradation; glycolysis; pyruvate from D-glyceraldehyde 3-phosphate: step 3/5. Its function is as follows. Catalyzes the interconversion of 2-phosphoglycerate and 3-phosphoglycerate. In Staphylococcus aureus (strain COL), this protein is 2,3-bisphosphoglycerate-independent phosphoglycerate mutase.